The chain runs to 506 residues: MTAPKPVVLCILDGWGLRAEREANAVALADTPTFDRLMATCPNATLVTHGPDVGLPRGQMGNSEVGHTNIGAGRVVAMDLGAIDLAIEEGSFPQNPALRDFIAKVKANGGTAHLMGVVSDGGVHGHIQHLISAVEVLAGEGIPVVIHAITDGRDVAPTSAGEFVGQLVRVLPEVARVGTVIGRYWAMDRDKRWDRVKRASDAMLHATGEHAPDAEAAVAAALARGETDEFIAPTVVGDYAGARDGDGFFCLNFRADRAREILAGLGQPGFDSYDTGTRPDWSAFLGMVDYSKEHDRFMTAAYPKPVIRNTLGEWVASHGLRQFRIAETEKYPHVTFFLNGGREAPETGEDRYMANSPKVATYDLQPEMSAPDVSDHLVEAIGAGYDLIVVNYANPDMVGHTGDLKAAMAAVEEVDRGLGRAVEAVTTAGGAMIVTADHGNCETMVDPETGGPHTAHTTNPVPVILVNGPAGARLHAGRLADLAPTLLQLMQLPQPEEMTGRSLIDA.

Residues Asp13 and Ser63 each contribute to the Mn(2+) site. Ser63 acts as the Phosphoserine intermediate in catalysis. Substrate contacts are provided by residues His124, 153 to 154 (RD), Arg183, Arg189, 254 to 257 (RADR), and Lys330. The Mn(2+) site is built by Asp396, His400, Asp437, His438, and His456.

Belongs to the BPG-independent phosphoglycerate mutase family. Monomer. It depends on Mn(2+) as a cofactor.

The enzyme catalyses (2R)-2-phosphoglycerate = (2R)-3-phosphoglycerate. It participates in carbohydrate degradation; glycolysis; pyruvate from D-glyceraldehyde 3-phosphate: step 3/5. In terms of biological role, catalyzes the interconversion of 2-phosphoglycerate and 3-phosphoglycerate. The polypeptide is 2,3-bisphosphoglycerate-independent phosphoglycerate mutase (Cereibacter sphaeroides (strain KD131 / KCTC 12085) (Rhodobacter sphaeroides)).